The primary structure comprises 467 residues: DNA polymerase IV (467 aa).

A UmuC domain is found at 5 to 187; sequence VLHIDMDAFF…LPVGALWGVG (183 aa). D9 and D104 together coordinate Mg(2+). The active site involves E105. Disordered stretches follow at residues 364 to 383 and 429 to 449; these read PDTDYEVGVQSSSSSESTQV and KGRTKSFSMDDPDLTPADPLD.

The protein belongs to the DNA polymerase type-Y family. In terms of assembly, monomer. Mg(2+) is required as a cofactor.

The protein localises to the cytoplasm. The enzyme catalyses DNA(n) + a 2'-deoxyribonucleoside 5'-triphosphate = DNA(n+1) + diphosphate. Its function is as follows. Poorly processive, error-prone DNA polymerase involved in untargeted mutagenesis. Copies undamaged DNA at stalled replication forks, which arise in vivo from mismatched or misaligned primer ends. These misaligned primers can be extended by PolIV. Exhibits no 3'-5' exonuclease (proofreading) activity. May be involved in translesional synthesis, in conjunction with the beta clamp from PolIII. The chain is DNA polymerase IV from Corynebacterium glutamicum (strain ATCC 13032 / DSM 20300 / JCM 1318 / BCRC 11384 / CCUG 27702 / LMG 3730 / NBRC 12168 / NCIMB 10025 / NRRL B-2784 / 534).